We begin with the raw amino-acid sequence, 778 residues long: Dynein axonemal intermediate chain 4 (778 aa).

WD repeat units follow at residues 477 to 517, 526 to 573, 586 to 629, 633 to 673, 676 to 715, and 721 to 760; these read HCES…QTPI, LHTS…ECVD, RHIS…QYLE, AHKR…PVMG, SGQR…LDPT, and SPGV…AGGG.

Part of the multisubunit axonemal dynein complex formed at least of two heavy chains and a number of intermediate and light chains.

The protein resides in the cytoplasm. It localises to the cytoskeleton. Its subcellular location is the flagellum axoneme. It is found in the cilium axoneme. The protein localises to the dynein axonemal particle. Functionally, plays a critical role in the assembly of axonemal dynein complex. Plays a key role in ciliary motility. The protein is Dynein axonemal intermediate chain 4 of Danio rerio (Zebrafish).